The chain runs to 418 residues: Multidrug resistance protein MdtG (418 aa).

11 helical membrane-spanning segments follow: residues 19–39, 56–76, 90–110, 113–133, 144–164, 171–191, 222–242, 251–271, 288–308, 317–337, and 376–396; these read IGCF…PLYV, LVFS…GGLA, LGMA…QFLI, ALLG…ATQI, TLST…GVLA, PVFF…LLFI, LFVT…ILTL, VANI…AALI, ILIA…FVQT, FLLG…LVYN, and AVFL…GLSL.

It belongs to the major facilitator superfamily. DHA1 family. MdtG (TC 2.A.1.2.20) subfamily.

It localises to the cell inner membrane. The polypeptide is Multidrug resistance protein MdtG (Enterobacter lignolyticus (strain SCF1)).